The chain runs to 713 residues: MMQESATETISNSSMNQNGMSTLSSQLDAGSRDGRSSGDTSSEVSTVELLHLQQQQALQAARQLLLQQQTSGLKSPKSSDKQRPLQVPVSVAMMTPQVITPQQMQQILQQQVLSPQQLQALLQQQQAVMLQQQQLQEFYKKQQEQLHLQLLQQQQQQQQQQQQQQQQQQQQQQQQQQQQQQQQQQQQQQHPGKQAKEQQQQQQQQQQLAAQQLVFQQQLLQMQQLQQQQHLLSLQRQGLISIPPGQAALPVQSLPQAGLSPAEIQQLWKEVTGVHSMEDNGIKHGGLDLTTNNSSSTTSSTTSKASPPITHHSIVNGQSSVLNARRDSSSHEETGASHTLYGHGVCKWPGCESICEDFGQFLKHLNNEHALDDRSTAQCRVQMQVVQQLEIQLSKERERLQAMMTHLHMRPSEPKPSPKPLNLVSSVTMSKNMLETSPQSLPQTPTTPTAPVTPITQGPSVITPASVPNVGAIRRRHSDKYNIPMSSEIAPNYEFYKNADVRPPFTYATLIRQAIMESSDRQLTLNEIYSWFTRTFAYFRRNAATWKNAVRHNLSLHKCFVRVENVKGAVWTVDEVEYQKRRSQKITGSPTLVKNIPTSLGYGAALNASLQAALAESSLPLLSNPGLINNASSGLLQAVHEDLNGSLDHIDSNGNSSPGCSPQPHIHSIHVKEEPVIAEDEDCPMSLVTTANHSPELEDDREIEEEPLSEDLE.

A compositionally biased stretch (polar residues) spans 1–28 (MMQESATETISNSSMNQNGMSTLSSQLD). Disordered regions lie at residues 1–44 (MMQE…SSEV) and 283–337 (KHGG…TGAS). Low complexity predominate over residues 290 to 303 (TTNNSSSTTSSTTS). Residues 313–322 (SIVNGQSSVL) are compositionally biased toward polar residues. The span at 324-335 (ARRDSSSHEETG) shows a compositional bias: basic and acidic residues. The C2H2-type zinc-finger motif lies at 344–369 (GVCKWPGCESICEDFGQFLKHLNNEH). A leucine-zipper region spans residues 386–407 (VQQLEIQLSKERERLQAMMTHL). The segment at 420–424 (PLNLV) is CTBP1-binding. The segment covering 436-457 (TSPQSLPQTPTTPTAPVTPITQ) has biased composition (low complexity). A disordered region spans residues 436 to 463 (TSPQSLPQTPTTPTAPVTPITQGPSVIT). The fork-head DNA-binding region spans 502–592 (RPPFTYATLI…SQKITGSPTL (91 aa)). Disordered regions lie at residues 647-666 (LDHIDSNGNSSPGCSPQPHI) and 676-713 (VIAEDEDCPMSLVTTANHSPELEDDREIEEEPLSEDLE). The span at 697–713 (LEDDREIEEEPLSEDLE) shows a compositional bias: acidic residues.

As to quaternary structure, forms homodimers and heterodimers with FOXP1 and FOXP4. Dimerization is required for DNA-binding. Interacts with CTBP1. Interacts with FOXP1. Interacts with TBR1. Interacts with ZMYM2.

Its subcellular location is the nucleus. Transcriptional repressor that may play a role in the specification and differentiation of lung epithelium. May also play a role in developing neural, gastrointestinal and cardiovascular tissues. Can act with CTBP1 to synergistically repress transcription but CTPBP1 is not essential. Plays a role in synapse formation by regulating SRPX2 levels. In Gorilla gorilla gorilla (Western lowland gorilla), this protein is Forkhead box protein P2 (FOXP2).